Reading from the N-terminus, the 359-residue chain is Peptide chain release factor 1 (359 aa).

Q235 carries the post-translational modification N5-methylglutamine. The tract at residues 283-309 (QKAESERSQARRSQVGSGDRSERIRTY) is disordered.

This sequence belongs to the prokaryotic/mitochondrial release factor family. Post-translationally, methylated by PrmC. Methylation increases the termination efficiency of RF1.

The protein localises to the cytoplasm. Functionally, peptide chain release factor 1 directs the termination of translation in response to the peptide chain termination codons UAG and UAA. This is Peptide chain release factor 1 from Brucella suis (strain ATCC 23445 / NCTC 10510).